We begin with the raw amino-acid sequence, 402 residues long: Bacteriochlorophyllide c C-7(1)-hydroxylase (402 aa).

Residues Val-104–Pro-359 enclose the Radical SAM core domain. The [4Fe-4S] cluster site is built by Cys-120, Cys-129, and Cys-132.

The protein belongs to the radical SAM superfamily. The cofactor is [4Fe-4S] cluster.

It catalyses the reaction a bacteriochlorophyllide c + 2 S-adenosyl-L-methionine + H2O = a bacteriochlorophyllide e + 2 5'-deoxyadenosine + 2 L-methionine + 2 H(+). It carries out the reaction a bacteriochlorophyllide d + 2 S-adenosyl-L-methionine + H2O = a bacteriochlorophyllide f + 2 5'-deoxyadenosine + 2 L-methionine + 2 H(+). The protein operates within porphyrin-containing compound metabolism; bacteriochlorophyll biosynthesis. Functionally, involved in the biosynthesis of bacteriochlorophyll e (BChl e). Catalyzes two consecutive hydroxylation reactions of the C-7 methyl group of bacteriochlorophyllide c (BChlide c) to form a geminal diol intermediate that spontaneously dehydrates to produce the formyl group of bacteriochlorophyllide e (BChlide e). Also able to catalyze the same reaction for bacteriochlorophyllide d (BChlide d) to give rise to bacteriochlorophyllide f (BChlide f). In Chlorobaculum limnaeum, this protein is Bacteriochlorophyllide c C-7(1)-hydroxylase.